The chain runs to 528 residues: Beta-hexosaminidase subunit alpha (528 aa).

An N-terminal signal peptide occupies residues 1–22; sequence MAGCRLWVSLLLAAALACLATA. Residues 23–88 constitute a propeptide that is removed on maturation; the sequence is LWPWPQYIQT…PRPSFSKKQQ (66 aa). A disulfide bridge links Cys58 with Cys104. Residues Asn115, Asn157, and Asn295 are each glycosylated (N-linked (GlcNAc...) asparagine). Cys277 and Cys328 are oxidised to a cystine. Glu323 (proton donor) is an active-site residue. The critical for hydrolysis GM2 gangliosides stretch occupies residues 422 to 423; that stretch reads NR. Asn487 is a glycosylation site (N-linked (GlcNAc...) asparagine). Cys504 and Cys521 are disulfide-bonded.

Belongs to the glycosyl hydrolase 20 family. As to quaternary structure, there are 3 beta-hexosaminidase isozymes: isozyme A (hexosaminidase A) is a heterodimer composed of one subunit alpha and one subunit beta (chain A and B); isozyme B (hexosaminidase B) is a homodimer of two beta subunits (two chains A and B); isozyme S (hexosaminidase S) is a homodimer of two alpha subunits. The composition of the dimer (isozyme A versus isozyme S) has a significant effect on the substrate specificity of the alpha subunit active site.

It localises to the lysosome. It carries out the reaction Hydrolysis of terminal non-reducing N-acetyl-D-hexosamine residues in N-acetyl-beta-D-hexosaminides.. The catalysed reaction is N-acetyl-beta-D-galactosaminyl-(1-&gt;4)-beta-D-3-sulfogalactosyl-(1-&gt;4)-beta-D-glucosyl-(1&lt;-&gt;1')-ceramide + H2O = a beta-D-3-sulfogalactosyl-(1-&gt;4)-beta-D-glucosyl-(1&lt;-&gt;1')-ceramide + N-acetyl-beta-D-galactosamine. It catalyses the reaction a ganglioside GM2 (d18:1(4E)) + H2O = a ganglioside GM3 (d18:1(4E)) + N-acetyl-beta-D-galactosamine. The enzyme catalyses a ganglioside GM2 + H2O = a ganglioside GM3 + N-acetyl-beta-D-galactosamine. It carries out the reaction beta-D-GalNAc-(1-&gt;4)-alpha-L-IdoA-(1-&gt;3)-beta-D-GalNAc-4-sulfate-(1-&gt;4)-alpha-L-IdoA-(1-&gt;3)-D-GalNAc-4-sulfate + H2O = alpha-L-IdoA-(1-&gt;3)-beta-D-GalNAc-4-sulfate-(1-&gt;4)-alpha-L-IdoA-(1-&gt;3)-D-GalNAc-4-sulfate + N-acetyl-D-galactosamine. The catalysed reaction is N-acetyl-beta-D-6-sulfogalactosaminyl-(1-&gt;4)-alpha-L-iduronyl-(1-&gt;3)-N-acetyl-D-6-sulfogalactosamine + H2O = alpha-L-iduronyl-(1-&gt;3)-N-acetyl-D-6-sulfogalactosamine + N-acetyl-D-6-sulfogalactosamine. With respect to regulation, addition of GM2A stimulates the hydrolysis of sulfated glycosphingolipid SM2 and the ganglioside GM2. In terms of biological role, hydrolyzes the non-reducing end N-acetyl-D-hexosamine and/or sulfated N-acetyl-D-hexosamine of glycoconjugates, such as the oligosaccharide moieties from proteins and neutral glycolipids, or from certain mucopolysaccharides. The isozyme S is as active as the isozyme A on the anionic bis-sulfated glycans, the chondroitin-6-sulfate trisaccharide (C6S-3), and the dermatan sulfate pentasaccharide, and the sulfated glycosphingolipid SM2. The isozyme B does not hydrolyze each of these substrates, however hydrolyzes efficiently neutral oligosaccharide. Only the isozyme A is responsible for the degradation of GM2 gangliosides in the presence of GM2A. This is Beta-hexosaminidase subunit alpha from Rattus norvegicus (Rat).